The following is a 622-amino-acid chain: Low affinity potassium transport system protein Kup (622 aa).

The next 12 helical transmembrane spans lie at 9–29 (LPAI…TSPL), 49–69 (VFGF…IKYL), 103–123 (VIMG…TPAI), 137–157 (PQLD…LFMI), 165–185 (VGKL…GLGL), 213–233 (VSFI…ALYA), 247–267 (WFTV…ALLL), 276–296 (PFFL…AALA), 337–357 (IYIP…IVSF), 363–383 (LAAA…ILST), 396–416 (FVAL…TANL), and 419–439 (LLSG…VMTT).

The protein belongs to the HAK/KUP transporter (TC 2.A.72) family.

The protein localises to the cell inner membrane. The catalysed reaction is K(+)(in) + H(+)(in) = K(+)(out) + H(+)(out). Its function is as follows. Responsible for the low-affinity transport of potassium into the cell. Likely operates as a K(+):H(+) symporter. The protein is Low affinity potassium transport system protein Kup of Shigella boydii serotype 18 (strain CDC 3083-94 / BS512).